Here is a 483-residue protein sequence, read N- to C-terminus: Cysteine proteinase 1, mitochondrial (483 aa).

A mitochondrion-targeting transit peptide spans 1–30 (MLPTSVSRSLYLKTFRSHLLRAPQIVLKRM). Catalysis depends on residues cysteine 102, histidine 398, and asparagine 421. Position 483 (lysine 483) is a propeptide, removed in mature form; by autocatalysis.

The protein belongs to the peptidase C1 family. In terms of assembly, homohexamer. Binds to nucleic acids. Binds single-stranded DNA and RNA with higher affinity than double-stranded DNA. Post-translationally, the N-terminus of isoform Cytoplasmic is blocked.

The protein resides in the mitochondrion. Its subcellular location is the cytoplasm. It carries out the reaction Inactivates bleomycin B2 (a cytotoxic glycometallopeptide) by hydrolysis of a carboxyamide bond of beta-aminoalanine, but also shows general aminopeptidase activity. The specificity varies somewhat with source, but amino acid arylamides of Met, Leu and Ala are preferred.. With respect to regulation, inhibited by E64, a specific inhibitor of cysteine proteases, N-ethylmaleimide, iodacetamide, and mercury and zinc ions. In terms of biological role, the normal physiological role of the enzyme is unknown, but it is not essential for the viability of yeast cells. Has aminopeptidase activity, shortening substrate peptides sequentially by 1 amino acid. Has bleomycin hydrolase activity, which can protect the cell from the toxic effects of bleomycin. Has homocysteine-thiolactonase activity, protecting the cell against homocysteine toxicity. Acts as a repressor in the GAL4 regulatory system, but this does not require either the peptidase or nucleic acid-binding activities. The protein is Cysteine proteinase 1, mitochondrial (LAP3) of Saccharomyces cerevisiae (strain AWRI1631) (Baker's yeast).